The following is a 302-amino-acid chain: Recombination-associated protein RdgC (302 aa).

Belongs to the RdgC family.

It is found in the cytoplasm. Its subcellular location is the nucleoid. In terms of biological role, may be involved in recombination. This chain is Recombination-associated protein RdgC, found in Actinobacillus pleuropneumoniae serotype 3 (strain JL03).